The sequence spans 141 residues: Large ribosomal subunit protein uL11c (141 aa).

Belongs to the universal ribosomal protein uL11 family. Part of the ribosomal stalk of the 50S ribosomal subunit. Interacts with L10 and the large rRNA to form the base of the stalk. L10 forms an elongated spine to which L12 dimers bind in a sequential fashion forming a multimeric L10(L12)X complex.

It is found in the plastid. The protein resides in the cyanelle. In terms of biological role, forms part of the ribosomal stalk which helps the ribosome interact with GTP-bound translation factors. The chain is Large ribosomal subunit protein uL11c from Cyanophora paradoxa.